A 346-amino-acid chain; its full sequence is S-adenosylmethionine:tRNA ribosyltransferase-isomerase (346 aa).

It belongs to the QueA family. As to quaternary structure, monomer.

It localises to the cytoplasm. It carries out the reaction 7-aminomethyl-7-carbaguanosine(34) in tRNA + S-adenosyl-L-methionine = epoxyqueuosine(34) in tRNA + adenine + L-methionine + 2 H(+). It participates in tRNA modification; tRNA-queuosine biosynthesis. Its function is as follows. Transfers and isomerizes the ribose moiety from AdoMet to the 7-aminomethyl group of 7-deazaguanine (preQ1-tRNA) to give epoxyqueuosine (oQ-tRNA). This Neisseria gonorrhoeae (strain ATCC 700825 / FA 1090) protein is S-adenosylmethionine:tRNA ribosyltransferase-isomerase.